A 23-amino-acid chain; its full sequence is uncharacterized protein (23 aa).

It is found in the plastid. The protein resides in the chloroplast. This is an uncharacterized protein from Zea mays (Maize).